A 307-amino-acid polypeptide reads, in one-letter code: 4-hydroxythreonine-4-phosphate dehydrogenase (307 aa).

H126 and T127 together coordinate substrate. H156, H195, and H251 together coordinate a divalent metal cation. Substrate is bound by residues K259, N268, and R277.

Belongs to the PdxA family. Homodimer. It depends on Zn(2+) as a cofactor. Requires Mg(2+) as cofactor. Co(2+) is required as a cofactor.

It localises to the cytoplasm. It carries out the reaction 4-(phosphooxy)-L-threonine + NAD(+) = 3-amino-2-oxopropyl phosphate + CO2 + NADH. It functions in the pathway cofactor biosynthesis; pyridoxine 5'-phosphate biosynthesis; pyridoxine 5'-phosphate from D-erythrose 4-phosphate: step 4/5. Its function is as follows. Catalyzes the NAD(P)-dependent oxidation of 4-(phosphooxy)-L-threonine (HTP) into 2-amino-3-oxo-4-(phosphooxy)butyric acid which spontaneously decarboxylates to form 3-amino-2-oxopropyl phosphate (AHAP). The sequence is that of 4-hydroxythreonine-4-phosphate dehydrogenase from Helicobacter pylori (strain HPAG1).